The sequence spans 134 residues: Small ribosomal subunit protein uS8c (134 aa).

The protein belongs to the universal ribosomal protein uS8 family. In terms of assembly, part of the 30S ribosomal subunit.

It is found in the plastid. It localises to the chloroplast. Its function is as follows. One of the primary rRNA binding proteins, it binds directly to 16S rRNA central domain where it helps coordinate assembly of the platform of the 30S subunit. The sequence is that of Small ribosomal subunit protein uS8c (rps8) from Aethionema grandiflorum (Persian stone-cress).